Here is a 525-residue protein sequence, read N- to C-terminus: Mitochondrial-processing peptidase subunit alpha (525 aa).

The transit peptide at 1 to 33 (MAAVVLAATRLLRGSGSWGCSRLRFGPPAYRRF) directs the protein to the mitochondrion. Lysine 64 is modified (N6-succinyllysine). Lysine 299 is subject to N6-acetyllysine.

This sequence belongs to the peptidase M16 family. In terms of assembly, heterodimer of PMPCA (alpha) and PMPCB (beta) subunits, forming the mitochondrial processing protease (MPP) in which PMPCA is involved in substrate recognition and binding and PMPCB is the catalytic subunit. In terms of tissue distribution, ubiquitously expressed with highest expression in fetal tissues and adult brain, cerebellum and cerebellar vermis.

The protein resides in the mitochondrion matrix. It is found in the mitochondrion inner membrane. Its function is as follows. Substrate recognition and binding subunit of the essential mitochondrial processing protease (MPP), which cleaves the mitochondrial sequence off newly imported precursors proteins. This Homo sapiens (Human) protein is Mitochondrial-processing peptidase subunit alpha (PMPCA).